We begin with the raw amino-acid sequence, 335 residues long: Phospho-N-acetylmuramoyl-pentapeptide-transferase (335 aa).

9 helical membrane-spanning segments follow: residues 2-22, 55-75, 77-97, 118-137, 153-173, 193-213, 238-258, 263-283, and 313-333; these read PPLF…LILV, IPTA…LLLL, CNLW…ALGW, FFIQ…IAYG, LPHC…AIVG, VIAC…WAFI, IFMG…CAVL, FMLL…ILQV, and VVRN…FAVF.

The protein belongs to the glycosyltransferase 4 family. MraY subfamily. Mg(2+) serves as cofactor.

The protein resides in the cell inner membrane. It carries out the reaction UDP-N-acetyl-alpha-D-muramoyl-L-alanyl-gamma-D-glutamyl-meso-2,6-diaminopimeloyl-D-alanyl-D-alanine + di-trans,octa-cis-undecaprenyl phosphate = di-trans,octa-cis-undecaprenyl diphospho-N-acetyl-alpha-D-muramoyl-L-alanyl-D-glutamyl-meso-2,6-diaminopimeloyl-D-alanyl-D-alanine + UMP. It participates in cell wall biogenesis; peptidoglycan biosynthesis. Catalyzes the initial step of the lipid cycle reactions in the biosynthesis of the cell wall peptidoglycan: transfers peptidoglycan precursor phospho-MurNAc-pentapeptide from UDP-MurNAc-pentapeptide onto the lipid carrier undecaprenyl phosphate, yielding undecaprenyl-pyrophosphoryl-MurNAc-pentapeptide, known as lipid I. This Chlamydia muridarum (strain MoPn / Nigg) protein is Phospho-N-acetylmuramoyl-pentapeptide-transferase.